Reading from the N-terminus, the 67-residue chain is MGSLSTLSLNLSHVLALFLVSFILMAPYTAFILKLVKKSDLRTATLTGIVAGILSNPGLFAYMGQWI.

2 helical membrane passes run Asn10–Ile32 and Ala44–Trp66.

It is found in the cell membrane. This is an uncharacterized protein from Archaeoglobus fulgidus (strain ATCC 49558 / DSM 4304 / JCM 9628 / NBRC 100126 / VC-16).